Reading from the N-terminus, the 546-residue chain is MFLLSVFFPLLGGLVNTSPIARFLGHRGSSIIAIGCMVVAFISSVVIYYEVVFMGCAVSVDVFGTWFSVGTFHAGWTFNFDLLTANMLFTVTGVSMAVHMYACDYMRQDPHLNLFLGYLSYFTGFMCVLVAADNLLVMLVGWEGIGVCSYLLIGYWSHRLSAVKSAQKAILVNRVSDGLLMWGVLWVWYHLGSLEYDLLNVYSASGFVGLSILIGAMGKSAQILFHVWLADAMEGPTPVSALIHAATLVTAGVYLLVRLHIHDEMFVIIVGSLTAFMAGVFGATQSDLKRVIAYSTCSQLGYMMVSLGLGETGGEASMGHLMTHASFKAALFLAAGMVISGNGGNQHIARYGGSAHSAMFTMLTLMVASLSLIGWPELSGFYSKETILNLAAICADPIADVAHTLLLLTAMLTSAYTTKLFYQCFMVDFSGSSVTPVRNVLPILAMAILLLDIMLKVWVGTNLLSGMLFFLPWGVKTLPFGLMVAGILTATAAVGSERFTLIRFCGSRWGFDQLFARSPVNPIFDLGRITWAIGDRGLLSVGNLRA.

Transmembrane regions (helical) follow at residues 1–21, 31–51, 52–72, 82–102, 112–132, 135–155, 175–195, 198–218, 237–257, 264–284, 291–310, 321–341, 358–378, 387–407, 440–460, and 468–488; these read MFLL…SPIA, IIAI…YYEV, VFMG…VGTF, LLTA…HMYA, LNLF…LVAA, LLVM…LIGY, VSDG…GSLE, LLNV…GAMG, TPVS…YLLV, EMFV…FGAT, VIAY…LGLG, LMTH…VISG, AMFT…WPEL, ILNL…TLLL, VLPI…VWVG, and LFFL…AGIL.

Belongs to the complex I subunit 5 family.

The protein resides in the mitochondrion inner membrane. The enzyme catalyses a ubiquinone + NADH + 5 H(+)(in) = a ubiquinol + NAD(+) + 4 H(+)(out). Core subunit of the mitochondrial membrane respiratory chain NADH dehydrogenase (Complex I) that is believed to belong to the minimal assembly required for catalysis. Complex I functions in the transfer of electrons from NADH to the respiratory chain. The immediate electron acceptor for the enzyme is believed to be ubiquinone. This Chlamydomonas reinhardtii (Chlamydomonas smithii) protein is NADH-ubiquinone oxidoreductase chain 5 (ND5).